The following is a 484-amino-acid chain: Glutamate--tRNA ligase (484 aa).

A 'HIGH' region motif is present at residues 10 to 20 (PSPTGYLHVGG). The 'KMSKS' region motif lies at 252-256 (KLSKR). Lys255 contacts ATP.

Belongs to the class-I aminoacyl-tRNA synthetase family. Glutamate--tRNA ligase type 1 subfamily. As to quaternary structure, monomer.

The protein localises to the cytoplasm. The catalysed reaction is tRNA(Glu) + L-glutamate + ATP = L-glutamyl-tRNA(Glu) + AMP + diphosphate. Its function is as follows. Catalyzes the attachment of glutamate to tRNA(Glu) in a two-step reaction: glutamate is first activated by ATP to form Glu-AMP and then transferred to the acceptor end of tRNA(Glu). The chain is Glutamate--tRNA ligase from Mycoplasma genitalium (strain ATCC 33530 / DSM 19775 / NCTC 10195 / G37) (Mycoplasmoides genitalium).